We begin with the raw amino-acid sequence, 521 residues long: GMP synthase [glutamine-hydrolyzing] (521 aa).

Residues 8–203 form the Glutamine amidotransferase type-1 domain; that stretch reads KILILDFGAQ…VVDVCGCQTL (196 aa). The active-site Nucleophile is the Cys-85. Active-site residues include His-177 and Glu-179. In terms of domain architecture, GMPS ATP-PPase spans 204–396; sequence WTAANIIDDQ…LGLPRTMVYR (193 aa). 231–237 contributes to the ATP binding site; it reads SGGVDSS.

In terms of assembly, homodimer.

It carries out the reaction XMP + L-glutamine + ATP + H2O = GMP + L-glutamate + AMP + diphosphate + 2 H(+). It functions in the pathway purine metabolism; GMP biosynthesis; GMP from XMP (L-Gln route): step 1/1. Catalyzes the synthesis of GMP from XMP. This chain is GMP synthase [glutamine-hydrolyzing], found in Xanthomonas campestris pv. campestris (strain B100).